Here is a 209-residue protein sequence, read N- to C-terminus: Probable glutathione peroxidase 8 (209 aa).

Met1 bears the N-acetylmethionine mark. The chain crosses the membrane as a helical span at residues 18–40; the sequence is IFAVLLSMVLCTVMLFLLQLKFL. The active site involves Cys79.

This sequence belongs to the glutathione peroxidase family.

It is found in the membrane. It catalyses the reaction 2 glutathione + H2O2 = glutathione disulfide + 2 H2O. The protein is Probable glutathione peroxidase 8 (Gpx8) of Mus musculus (Mouse).